The chain runs to 213 residues: Urease accessory protein UreE (213 aa).

The interval 170–213 (EHHGHSHSHSHSHSHDHDHDHDHDHDHDHQHGPSCSHGHHHGHR) is disordered. Over residues 182–200 (HSHDHDHDHDHDHDHDHQH) the composition is skewed to basic and acidic residues.

The protein belongs to the UreE family.

The protein resides in the cytoplasm. Involved in urease metallocenter assembly. Binds nickel. Probably functions as a nickel donor during metallocenter assembly. In Burkholderia mallei (strain NCTC 10229), this protein is Urease accessory protein UreE.